A 196-amino-acid polypeptide reads, in one-letter code: Crossover junction endodeoxyribonuclease RuvC (196 aa).

Residues Asp23, Glu83, and His156 contribute to the active site. Mg(2+) contacts are provided by Asp23, Glu83, and His156.

The protein belongs to the RuvC family. Homodimer which binds Holliday junction (HJ) DNA. The HJ becomes 2-fold symmetrical on binding to RuvC with unstacked arms; it has a different conformation from HJ DNA in complex with RuvA. In the full resolvosome a probable DNA-RuvA(4)-RuvB(12)-RuvC(2) complex forms which resolves the HJ. Mg(2+) is required as a cofactor.

It localises to the cytoplasm. The enzyme catalyses Endonucleolytic cleavage at a junction such as a reciprocal single-stranded crossover between two homologous DNA duplexes (Holliday junction).. Functionally, the RuvA-RuvB-RuvC complex processes Holliday junction (HJ) DNA during genetic recombination and DNA repair. Endonuclease that resolves HJ intermediates. Cleaves cruciform DNA by making single-stranded nicks across the HJ at symmetrical positions within the homologous arms, yielding a 5'-phosphate and a 3'-hydroxyl group; requires a central core of homology in the junction. The consensus cleavage sequence is 5'-(A/T)TT(C/G)-3'. Cleavage occurs on the 3'-side of the TT dinucleotide at the point of strand exchange. HJ branch migration catalyzed by RuvA-RuvB allows RuvC to scan DNA until it finds its consensus sequence, where it cleaves and resolves the cruciform DNA. The chain is Crossover junction endodeoxyribonuclease RuvC from Treponema pallidum (strain Nichols).